Reading from the N-terminus, the 403-residue chain is Argininosuccinate synthase (403 aa).

Residues 10–18 and Ala38 contribute to the ATP site; that span reads AYSGGVDTS. Tyr89 provides a ligand contact to L-citrulline. Gly119 contacts ATP. The L-aspartate site is built by Thr121, Asn125, and Asp126. Residue Asn125 coordinates L-citrulline. L-citrulline is bound by residues Arg129, Ser177, Ser186, Glu262, and Tyr274.

It belongs to the argininosuccinate synthase family. Type 1 subfamily. As to quaternary structure, homotetramer.

The protein resides in the cytoplasm. The enzyme catalyses L-citrulline + L-aspartate + ATP = 2-(N(omega)-L-arginino)succinate + AMP + diphosphate + H(+). The protein operates within amino-acid biosynthesis; L-arginine biosynthesis; L-arginine from L-ornithine and carbamoyl phosphate: step 2/3. The chain is Argininosuccinate synthase from Synechococcus sp. (strain CC9902).